A 120-amino-acid polypeptide reads, in one-letter code: Ribosome-binding factor A (120 aa).

This sequence belongs to the RbfA family. In terms of assembly, monomer. Binds 30S ribosomal subunits, but not 50S ribosomal subunits or 70S ribosomes.

It localises to the cytoplasm. Its function is as follows. One of several proteins that assist in the late maturation steps of the functional core of the 30S ribosomal subunit. Associates with free 30S ribosomal subunits (but not with 30S subunits that are part of 70S ribosomes or polysomes). Required for efficient processing of 16S rRNA. May interact with the 5'-terminal helix region of 16S rRNA. This Clostridium botulinum (strain Okra / Type B1) protein is Ribosome-binding factor A.